The following is a 361-amino-acid chain: Probable pectinesterase 50 (361 aa).

Residues 1–22 (MGYISMSVVAFLVVFASPVVLA) form the signal peptide. Glutamine 174 lines the substrate pocket. The active-site Proton donor is aspartate 197. Aspartate 218 serves as the catalytic Nucleophile. Substrate is bound by residues arginine 275 and tryptophan 277.

This sequence belongs to the pectinesterase family. Expressed in flower buds.

Its subcellular location is the secreted. The protein localises to the cell wall. It catalyses the reaction [(1-&gt;4)-alpha-D-galacturonosyl methyl ester](n) + n H2O = [(1-&gt;4)-alpha-D-galacturonosyl](n) + n methanol + n H(+). It participates in glycan metabolism; pectin degradation; 2-dehydro-3-deoxy-D-gluconate from pectin: step 1/5. Functionally, acts in the modification of cell walls via demethylesterification of cell wall pectin. The chain is Probable pectinesterase 50 (PME50) from Arabidopsis thaliana (Mouse-ear cress).